A 351-amino-acid chain; its full sequence is Photosystem II D2 protein (351 aa).

Residues 39–59 (TAYLALGGWFTGTTFVTSWYT) form a helical membrane-spanning segment. His116 contributes to the chlorophyll a binding site. The helical transmembrane segment at 123–139 (GFMLRQFEIARLVGIRP) threads the bilayer. Gln128 and Asn141 together coordinate pheophytin a. The helical transmembrane segment at 151–164 (VFLACFLIYPLGQH) threads the bilayer. A chlorophyll a-binding site is contributed by His196. The chain crosses the membrane as a helical span at residues 206–226 (GALLCGIHGATVQNTLFEDGA). A plastoquinone-binding residues include His213 and Phe260. His213 provides a ligand contact to Fe cation. Fe cation is bound at residue His267. Residues 277 to 293 (GMWTPSVGIVGLAVNLR) form a helical membrane-spanning segment.

It belongs to the reaction center PufL/M/PsbA/D family. PSII is composed of 1 copy each of membrane proteins PsbA, PsbB, PsbC, PsbD, PsbE, PsbF, PsbH, PsbI, PsbJ, PsbK, PsbL, PsbM, PsbT, PsbX, PsbY, Psb30/Ycf12, peripheral proteins PsbO, CyanoQ (PsbQ), PsbU, PsbV and a large number of cofactors. It forms dimeric complexes. The D1/D2 heterodimer binds P680, chlorophylls that are the primary electron donor of PSII, and subsequent electron acceptors. It shares a non-heme iron and each subunit binds pheophytin, quinone, additional chlorophylls, carotenoids and lipids. There is also a Cl(-1) ion associated with D1 and D2, which is required for oxygen evolution. The PSII complex binds additional chlorophylls, carotenoids and specific lipids. is required as a cofactor.

It is found in the cellular thylakoid membrane. The enzyme catalyses 2 a plastoquinone + 4 hnu + 2 H2O = 2 a plastoquinol + O2. Photosystem II (PSII) is a light-driven water:plastoquinone oxidoreductase that uses light energy to abstract electrons from H(2)O, generating O(2) and a proton gradient subsequently used for ATP formation. It consists of a core antenna complex that captures photons, and an electron transfer chain that converts photonic excitation into a charge separation. The D1/D2 (PsbA/PsbD) reaction center heterodimer binds P680, the primary electron donor of PSII as well as several subsequent electron acceptors. D2 is needed for assembly of a stable PSII complex. This is Photosystem II D2 protein from Prochlorococcus marinus (strain MIT 9313).